Here is a 288-residue protein sequence, read N- to C-terminus: UTP--glucose-1-phosphate uridylyltransferase (288 aa).

Belongs to the UDPGP type 2 family.

The catalysed reaction is alpha-D-glucose 1-phosphate + UTP + H(+) = UDP-alpha-D-glucose + diphosphate. It functions in the pathway glycolipid metabolism; diglucosyl-diacylglycerol biosynthesis. Functionally, catalyzes the formation of UDP-glucose from glucose-1-phosphate and UTP. This is an intermediate step in the biosynthesis of diglucosyl-diacylglycerol (Glc2-DAG), i.e. the predominant glycolipid found in the S.aureus membrane, which is also used as a membrane anchor for lipoteichoic acid (LTA). The polypeptide is UTP--glucose-1-phosphate uridylyltransferase (gtaB) (Staphylococcus aureus (strain bovine RF122 / ET3-1)).